A 391-amino-acid chain; its full sequence is Ferrochelatase (391 aa).

The Fe cation site is built by histidine 196 and glutamate 281.

It belongs to the ferrochelatase family.

The protein resides in the cytoplasm. The catalysed reaction is heme b + 2 H(+) = protoporphyrin IX + Fe(2+). Its pathway is porphyrin-containing compound metabolism; protoheme biosynthesis; protoheme from protoporphyrin-IX: step 1/1. In terms of biological role, catalyzes the ferrous insertion into protoporphyrin IX. This Prochlorococcus marinus (strain MIT 9215) protein is Ferrochelatase.